Reading from the N-terminus, the 105-residue chain is Small ribosomal subunit protein uS10 (105 aa).

The protein belongs to the universal ribosomal protein uS10 family. In terms of assembly, part of the 30S ribosomal subunit.

Its function is as follows. Involved in the binding of tRNA to the ribosomes. This Legionella pneumophila (strain Paris) protein is Small ribosomal subunit protein uS10.